The primary structure comprises 253 residues: Triosephosphate isomerase (253 aa).

8–10 provides a ligand contact to substrate; sequence NWK. Residue histidine 91 is the Electrophile of the active site. Glutamate 168 acts as the Proton acceptor in catalysis. Substrate-binding positions include glycine 174, serine 213, and 234 to 235; that span reads GG.

Belongs to the triosephosphate isomerase family. As to quaternary structure, homodimer.

The protein resides in the cytoplasm. The catalysed reaction is D-glyceraldehyde 3-phosphate = dihydroxyacetone phosphate. It participates in carbohydrate biosynthesis; gluconeogenesis. The protein operates within carbohydrate degradation; glycolysis; D-glyceraldehyde 3-phosphate from glycerone phosphate: step 1/1. Its function is as follows. Involved in the gluconeogenesis. Catalyzes stereospecifically the conversion of dihydroxyacetone phosphate (DHAP) to D-glyceraldehyde-3-phosphate (G3P). The protein is Triosephosphate isomerase of Acidiphilium cryptum (strain JF-5).